A 203-amino-acid polypeptide reads, in one-letter code: GTP cyclohydrolase-2 (203 aa).

49–53 (RIHSE) is a GTP binding site. Zn(2+) contacts are provided by Cys54, Cys65, and Cys67. GTP-binding positions include Gln70, 92–94 (EGR), and Thr114. Asp126 (proton acceptor) is an active-site residue. The active-site Nucleophile is Arg128. Residues Thr149 and Lys154 each coordinate GTP.

It belongs to the GTP cyclohydrolase II family. Zn(2+) is required as a cofactor.

It carries out the reaction GTP + 4 H2O = 2,5-diamino-6-hydroxy-4-(5-phosphoribosylamino)-pyrimidine + formate + 2 phosphate + 3 H(+). The protein operates within cofactor biosynthesis; riboflavin biosynthesis; 5-amino-6-(D-ribitylamino)uracil from GTP: step 1/4. Catalyzes the conversion of GTP to 2,5-diamino-6-ribosylamino-4(3H)-pyrimidinone 5'-phosphate (DARP), formate and pyrophosphate. The polypeptide is GTP cyclohydrolase-2 (Shewanella sp. (strain ANA-3)).